The chain runs to 105 residues: ATP-dependent Clp protease adapter protein ClpS (105 aa).

The segment at Met1–Val27 is disordered.

The protein belongs to the ClpS family. As to quaternary structure, binds to the N-terminal domain of the chaperone ClpA.

Functionally, involved in the modulation of the specificity of the ClpAP-mediated ATP-dependent protein degradation. The sequence is that of ATP-dependent Clp protease adapter protein ClpS from Mycolicibacterium paratuberculosis (strain ATCC BAA-968 / K-10) (Mycobacterium paratuberculosis).